We begin with the raw amino-acid sequence, 173 residues long: Dual-action ribosomal maturation protein DarP (173 aa).

This sequence belongs to the DarP family.

The protein localises to the cytoplasm. Member of a network of 50S ribosomal subunit biogenesis factors which assembles along the 30S-50S interface, preventing incorrect 23S rRNA structures from forming. Promotes peptidyl transferase center (PTC) maturation. This Pseudomonas putida (strain ATCC 700007 / DSM 6899 / JCM 31910 / BCRC 17059 / LMG 24140 / F1) protein is Dual-action ribosomal maturation protein DarP.